A 188-amino-acid chain; its full sequence is dITP/XTP pyrophosphatase (188 aa).

Position 7–12 (Thr-7–Lys-12) interacts with substrate. The Mg(2+) site is built by Glu-36 and Asp-65. Catalysis depends on Asp-65, which acts as the Proton acceptor. Residues Ser-66, Phe-141–Asp-144, Lys-164, and His-169–Arg-170 each bind substrate.

This sequence belongs to the HAM1 NTPase family. In terms of assembly, homodimer. Requires Mg(2+) as cofactor.

It catalyses the reaction XTP + H2O = XMP + diphosphate + H(+). The enzyme catalyses dITP + H2O = dIMP + diphosphate + H(+). The catalysed reaction is ITP + H2O = IMP + diphosphate + H(+). Functionally, pyrophosphatase that catalyzes the hydrolysis of nucleoside triphosphates to their monophosphate derivatives, with a high preference for the non-canonical purine nucleotides XTP (xanthosine triphosphate), dITP (deoxyinosine triphosphate) and ITP. Seems to function as a house-cleaning enzyme that removes non-canonical purine nucleotides from the nucleotide pool, thus preventing their incorporation into DNA/RNA and avoiding chromosomal lesions. This chain is dITP/XTP pyrophosphatase, found in Methanopyrus kandleri (strain AV19 / DSM 6324 / JCM 9639 / NBRC 100938).